Here is a 230-residue protein sequence, read N- to C-terminus: Flavin-dependent thymidylate synthase (230 aa).

Residues 1–217 enclose the ThyX domain; it reads MEIKVLEKGF…PVTYEAFLNF (217 aa). FAD is bound by residues Ser55, 78–80, and Glu86; that span reads RHR. DUMP-binding positions include 75–78, 86–90, and Arg156; these read QLVR and ERSGR. A ThyX motif motif is present at residues 78–88; that stretch reads RHRIASINERS. FAD contacts are provided by residues 172 to 174 and Asn178; that span reads NAR. Arg183 provides a ligand contact to dUMP. The active-site Involved in ionization of N3 of dUMP, leading to its activation is Arg183.

It belongs to the thymidylate synthase ThyX family. In terms of assembly, homotetramer. Requires FAD as cofactor.

The enzyme catalyses dUMP + (6R)-5,10-methylene-5,6,7,8-tetrahydrofolate + NADPH + H(+) = dTMP + (6S)-5,6,7,8-tetrahydrofolate + NADP(+). The protein operates within pyrimidine metabolism; dTTP biosynthesis. Its function is as follows. Catalyzes the reductive methylation of 2'-deoxyuridine-5'-monophosphate (dUMP) to 2'-deoxythymidine-5'-monophosphate (dTMP) while utilizing 5,10-methylenetetrahydrofolate (mTHF) as the methyl donor, and NADPH and FADH(2) as the reductant. This Kosmotoga olearia (strain ATCC BAA-1733 / DSM 21960 / TBF 19.5.1) protein is Flavin-dependent thymidylate synthase.